The chain runs to 100 residues: Integration host factor subunit beta (100 aa).

The protein belongs to the bacterial histone-like protein family. Heterodimer of an alpha and a beta chain.

In terms of biological role, this protein is one of the two subunits of integration host factor, a specific DNA-binding protein that functions in genetic recombination as well as in transcriptional and translational control. The protein is Integration host factor subunit beta of Agrobacterium fabrum (strain C58 / ATCC 33970) (Agrobacterium tumefaciens (strain C58)).